Here is an 837-residue protein sequence, read N- to C-terminus: Espin (837 aa).

9 ANK repeats span residues 1-31 (MALE…GPSL), 35-66 (LDAL…AVSR), 69-99 (NGAT…RVQE), 103-132 (SGAT…ANSA), 137-167 (TGAL…GVNA), 171-201 (NGAT…DPHL), 205-235 (DGMT…SFEQ), 238-267 (DGAT…EISQ), and 270-299 (WGGT…GLDV). Phosphoserine is present on residues Ser-337 and Ser-341. Positions 339–348 (DPSMDLEAKQ) are enriched in basic and acidic residues. Disordered regions lie at residues 339 to 459 (DPSM…VGLH), 477 to 712 (DSLK…PATL), 745 to 767 (KLQQ…EARL), and 785 to 816 (EREQ…TLGY). Residues 351–364 (SGMSSPNTTMSVQP) are compositionally biased toward polar residues. Residues 376–395 (LSNYDSCSSSHSSSKGQRST) show a composition bias toward low complexity. Residues Ser-400 and Ser-401 each carry the phosphoserine modification. Residues 423–455 (SLPPPPPPSFPPPPPPGTQLPPPPPGYPAPNPP) are compositionally biased toward pro residues. A phosphoserine mark is found at Ser-497, Ser-504, and Ser-531. The segment covering 581–604 (LPPPPPPPPLPEALSSPPPAPPLP) has biased composition (pro residues). The span at 617 to 626 (SSSSTGSTKS) shows a compositional bias: low complexity. Composition is skewed to polar residues over residues 627–636 (FNMMSPTGDN) and 651–662 (PTPQSKGLTTVF). Residue Ser-631 is modified to Phosphoserine. A WH2 domain is found at 635–652 (DNSELLAEIKAGKSLKPT). A compositionally biased stretch (low complexity) spans 663–673 (SGSGQPASQPE). Phosphoserine is present on residues Ser-670, Ser-674, and Ser-680. A coiled-coil region spans residues 738-814 (KRQVMVRKLQ…KEQSEKLRTL (77 aa)).

Monomer. Interacts with PFN2. Binds F-actin in a Ca(2+)-resistant fashion. Interacts (via N-terminal) with BAIAP2 (via SH3-domain). Interacts with MYO3A (via C-terminus). Interacts with MYO3B (via C-terminus). As to expression, expressed at high concentration in the microvillar parallel actin bundle (PAB) of hair cells stereocilia in the cochlea and vestibular system. Detected also at high levels of a number of other sensory cell types, including taste receptor cells, solitary chemoreceptor cells, vomeronasal sensory neurons and Merkel cells. Isoform 1 is detected in testis. Isoforms 2 is detected in small intestine and kidney (at protein level). Isoforms 3, 4, 6 and 8 are expressed in Purkinje cells dendritic spines.

It localises to the cytoplasm. It is found in the cytoskeleton. The protein localises to the cell projection. The protein resides in the stereocilium. Its subcellular location is the microvillus. It localises to the cell junction. It is found in the dendritic spine. Its function is as follows. Multifunctional actin-bundling protein. Plays a major role in regulating the organization, dimension, dynamics and signaling capacities of the actin filament-rich microvilli in the mechanosensory and chemosensory cells. Required for the assembly and stabilization of the stereociliary parallel actin bundles. Plays a crucial role in the formation and maintenance of inner ear hair cell stereocilia. Involved in the elongation of actin in stereocilia. In extrastriolar hair cells, required for targeting MYO3B to stereocilia tips, and for regulation of stereocilia diameter and staircase formation. The chain is Espin (Espn) from Rattus norvegicus (Rat).